The sequence spans 239 residues: Ribosomal RNA small subunit methyltransferase G (239 aa).

Residues G78, F83, 129–130 (AE), and R148 contribute to the S-adenosyl-L-methionine site.

The protein belongs to the methyltransferase superfamily. RNA methyltransferase RsmG family.

It is found in the cytoplasm. Its function is as follows. Specifically methylates the N7 position of a guanine in 16S rRNA. The polypeptide is Ribosomal RNA small subunit methyltransferase G (Clostridium perfringens (strain SM101 / Type A)).